A 491-amino-acid polypeptide reads, in one-letter code: Glutamate--tRNA ligase (491 aa).

The 'HIGH' region signature appears at 13 to 23 (PSPTGFLHIGN). Zn(2+) contacts are provided by cysteine 110, cysteine 112, cysteine 137, and histidine 139. Residues 254 to 258 (KLSKR) carry the 'KMSKS' region motif. Residue lysine 257 participates in ATP binding.

The protein belongs to the class-I aminoacyl-tRNA synthetase family. Glutamate--tRNA ligase type 1 subfamily. Monomer. Requires Zn(2+) as cofactor.

The protein localises to the cytoplasm. The catalysed reaction is tRNA(Glu) + L-glutamate + ATP = L-glutamyl-tRNA(Glu) + AMP + diphosphate. Functionally, catalyzes the attachment of glutamate to tRNA(Glu) in a two-step reaction: glutamate is first activated by ATP to form Glu-AMP and then transferred to the acceptor end of tRNA(Glu). The protein is Glutamate--tRNA ligase of Listeria monocytogenes serovar 1/2a (strain ATCC BAA-679 / EGD-e).